The primary structure comprises 269 residues: MQAKYSSTRDMLDDDDTTISLYSGTSTVTRRAEPRHSENGTPSSVWRPVALTLLTLCLVLLVGLAALGLVFFQFYQLSNIQQDSITEKDEKLGNMSRQLQSLQAQNRKLIETLQQVAVKLCRELYNKSGGHRCSPCPEKWKWYGDKCYQFYKESKNWQSCEYFCLADNATMLKISTQEELDFAMPQSYSEFFYSYWTGLSRNGSGKAWLWTDGTPYSFELFEIIIDPTNLRNRDCMTIFNGKAYSKDCKELRRCACERIAGRVVPGELQ.

Residues 1-51 (MQAKYSSTRDMLDDDDTTISLYSGTSTVTRRAEPRHSENGTPSSVWRPVAL) lie on the Cytoplasmic side of the membrane. Residues 52-72 (TLLTLCLVLLVGLAALGLVFF) form a helical; Signal-anchor for type II membrane protein membrane-spanning segment. Residues 73–269 (QFYQLSNIQQ…AGRVVPGELQ (197 aa)) are Extracellular-facing. Asn94, Asn126, Asn168, and Asn202 each carry an N-linked (GlcNAc...) asparagine glycan. The C-type lectin domain maps to 143 to 257 (YGDKCYQFYK…CKELRRCACE (115 aa)). 2 disulfide bridges follow: Cys164/Cys256 and Cys235/Cys248.

It is found in the membrane. This Mus musculus (Mouse) protein is C-type lectin domain family 1 member A (Clec1a).